We begin with the raw amino-acid sequence, 232 residues long: Endonuclease V (232 aa).

D43 and D109 together coordinate Mg(2+).

This sequence belongs to the endonuclease V family. Mg(2+) is required as a cofactor.

It is found in the cytoplasm. The catalysed reaction is Endonucleolytic cleavage at apurinic or apyrimidinic sites to products with a 5'-phosphate.. DNA repair enzyme involved in the repair of deaminated bases. Selectively cleaves double-stranded DNA at the second phosphodiester bond 3' to a deoxyinosine leaving behind the intact lesion on the nicked DNA. This is Endonuclease V from Thermofilum pendens (strain DSM 2475 / Hrk 5).